A 218-amino-acid polypeptide reads, in one-letter code: MPIILGYWNIRGLAHSIRLLLEYTDSSYEEKKYMMGDAPDYDRSQWLNEKFKLGLDFPNLPYLIDGTHKITQSNAILRYIARKHNLCGETEKEKIQEDILENQLMDNRMQLARLCYNPDFEKLKPEYLEGLPEMLKLYSQFLGKQPWFLGDKITFVDFIAYDVLERNQVFEPSCLDAFPNLKDFISRFEGLEKISAYMKSSRFLPRPVFTKMAVWGNK.

Residues proline 2–glycine 88 enclose the GST N-terminal domain. Tyrosine 7–tryptophan 8 is a glutathione binding site. Serine 27 and serine 44 each carry phosphoserine. Glutathione-binding positions include arginine 43 to tryptophan 46, lysine 50, asparagine 59 to leucine 60, and glutamine 72 to serine 73. A GST C-terminal domain is found at threonine 90–valine 208. Tyrosine 116 contacts substrate.

This sequence belongs to the GST superfamily. Mu family. As to quaternary structure, homodimer.

Its subcellular location is the cytoplasm. It carries out the reaction RX + glutathione = an S-substituted glutathione + a halide anion + H(+). It catalyses the reaction 11(S)-hydroxy-14(S),15(S)-epoxy-(5Z,8Z,12E)-eicosatrienoate + glutathione = (11S,15S)-dihydroxy-14(R)-S-glutathionyl-(5Z,8Z,12E)-eicosatrienoate. Conjugation of reduced glutathione to a wide number of exogenous and endogenous hydrophobic electrophiles. Participates in the formation of novel hepoxilin regioisomers. The polypeptide is Glutathione S-transferase Mu 2 (GSTM2) (Pongo abelii (Sumatran orangutan)).